Reading from the N-terminus, the 1366-residue chain is DNA-directed RNA polymerase subunit beta (1366 aa).

It belongs to the RNA polymerase beta chain family. In terms of assembly, the RNAP catalytic core consists of 2 alpha, 1 beta, 1 beta' and 1 omega subunit. When a sigma factor is associated with the core the holoenzyme is formed, which can initiate transcription.

The enzyme catalyses RNA(n) + a ribonucleoside 5'-triphosphate = RNA(n+1) + diphosphate. Functionally, DNA-dependent RNA polymerase catalyzes the transcription of DNA into RNA using the four ribonucleoside triphosphates as substrates. This is DNA-directed RNA polymerase subunit beta from Polynucleobacter necessarius subsp. necessarius (strain STIR1).